The following is a 310-amino-acid chain: N-acetyl-gamma-glutamyl-phosphate reductase (310 aa).

The active site involves Cys117.

The protein belongs to the NAGSA dehydrogenase family. Type 2 subfamily.

It is found in the cytoplasm. The enzyme catalyses N-acetyl-L-glutamate 5-semialdehyde + phosphate + NADP(+) = N-acetyl-L-glutamyl 5-phosphate + NADPH + H(+). It participates in amino-acid biosynthesis; L-arginine biosynthesis; N(2)-acetyl-L-ornithine from L-glutamate: step 3/4. Catalyzes the NADPH-dependent reduction of N-acetyl-5-glutamyl phosphate to yield N-acetyl-L-glutamate 5-semialdehyde. The sequence is that of N-acetyl-gamma-glutamyl-phosphate reductase from Rhizobium leguminosarum bv. trifolii (strain WSM2304).